The following is a 338-amino-acid chain: Malate dehydrogenase, mitochondrial (338 aa).

A mitochondrion-targeting transit peptide spans Met1–Asn24. NAD(+) is bound by residues Gly31–Gly37 and Asp57. O-linked (GlcNAc) serine glycosylation is present at Ser33. N6-acetyllysine; alternate occurs at positions 78 and 91. N6-succinyllysine; alternate is present on residues Lys78 and Lys91. Substrate contacts are provided by Arg104 and Arg110. Residues Asn117 and Ile140–Asn142 contribute to the NAD(+) site. Position 142 (Asn142) interacts with substrate. Lys165 carries the N6-acetyllysine modification. Arg176 contacts substrate. Lys185 is subject to N6-acetyllysine; alternate. Position 185 is an N6-succinyllysine; alternate (Lys185). Residue His200 is the Proton acceptor of the active site. Position 203 is an N6-succinyllysine (Lys203). N6-acetyllysine; alternate occurs at positions 215 and 239. N6-succinyllysine; alternate is present on residues Lys215 and Lys239. Lys239 is subject to N6-malonyllysine; alternate. At Ser246 the chain carries Phosphoserine. An NAD(+)-binding site is contributed by Met251. N6-succinyllysine is present on Lys269. 5 positions are modified to N6-acetyllysine; alternate: Lys296, Lys301, Lys307, Lys314, and Lys324. Lys296, Lys301, Lys307, Lys314, and Lys324 each carry N6-succinyllysine; alternate. Residue Lys307 is modified to N6-malonyllysine; alternate. Ser326 carries the phosphoserine modification. 3 positions are modified to N6-acetyllysine; alternate: Lys328, Lys329, and Lys335. At Lys328 the chain carries N6-succinyllysine; alternate. Lys329 bears the N6-malonyllysine; alternate mark. Lys335 is modified (N6-succinyllysine; alternate).

The protein belongs to the LDH/MDH superfamily. MDH type 1 family. In terms of assembly, homodimer. In terms of processing, acetylation is enhanced by up to 67% after treatment either with trichostin A (TSA) or with nicotinamide (NAM) with the appearance of tri- and tetraacetylations. Glucose also increases acetylation by about 60%.

The protein resides in the mitochondrion matrix. The enzyme catalyses (S)-malate + NAD(+) = oxaloacetate + NADH + H(+). With respect to regulation, enzyme activity is enhanced by acetylation. The polypeptide is Malate dehydrogenase, mitochondrial (MDH2) (Homo sapiens (Human)).